Here is a 547-residue protein sequence, read N- to C-terminus: Chaperonin GroEL (547 aa).

Residues 30 to 33, K51, 87 to 91, G415, 479 to 481, and D495 contribute to the ATP site; these read TLGP, DGTTT, and NAA.

The protein belongs to the chaperonin (HSP60) family. As to quaternary structure, forms a cylinder of 14 subunits composed of two heptameric rings stacked back-to-back. Interacts with the co-chaperonin GroES.

The protein localises to the cytoplasm. It catalyses the reaction ATP + H2O + a folded polypeptide = ADP + phosphate + an unfolded polypeptide.. In terms of biological role, together with its co-chaperonin GroES, plays an essential role in assisting protein folding. The GroEL-GroES system forms a nano-cage that allows encapsulation of the non-native substrate proteins and provides a physical environment optimized to promote and accelerate protein folding. This Pseudomonas fluorescens (strain ATCC BAA-477 / NRRL B-23932 / Pf-5) protein is Chaperonin GroEL.